An 82-amino-acid polypeptide reads, in one-letter code: Consomatin Ro2 (82 aa).

A signal peptide spans 1–22; the sequence is MQTAYWLMVMMMVWITAPLYEG. Residues 23-57 constitute a propeptide that is removed on maturation; it reads GKPNDVIRGLVPDDLTPQFILRSLISRRRSDKDVR. Cys-62 and Cys-68 are joined by a disulfide. Residue Trp-64 is modified to D-tryptophan. Residues Pro-69 and Pro-70 each carry the 4-hydroxyproline modification. Residues 72–82 constitute a propeptide that is removed on maturation; that stretch reads LWRRHDRKGKD.

It belongs to the conotoxin C superfamily. Consomatin family. Expressed by the venom duct.

Its subcellular location is the secreted. In terms of biological role, moderately activates human somatostatin receptors (SSTR) with a preferential activation of SSTR1 and SSTR4. In vivo, does not cause behavioral changes in mice within a few minutes of intracranial injection, but causes a progressive loss of movement thereafter. Four to five hours after injection, mice recover, even with the highest dose tested. Shows antinociception and antihyperalgesia activities in two mouse models of acute pain, most probably by acting outside the central nervous system. The chain is Consomatin Ro2 from Conus rolani (Cone snail).